The primary structure comprises 275 residues: Mitochondrial outer membrane porin (275 aa).

It belongs to the eukaryotic mitochondrial porin (TC 1.B.8.1) family.

It localises to the mitochondrion outer membrane. Its function is as follows. Forms a channel through the cell membrane that allows diffusion of small hydrophilic molecules. The channel adopts an open conformation at low or zero membrane potential and a closed conformation at potentials above 30-40 mV. The open state has a weak anion selectivity whereas the closed state is cation-selective. The polypeptide is Mitochondrial outer membrane porin (VDAC1) (Triticum aestivum (Wheat)).